A 431-amino-acid chain; its full sequence is Adenylosuccinate synthetase (431 aa).

GTP is bound by residues 13-19 (GDEGKGK) and 41-43 (GHT). Aspartate 14 (proton acceptor) is an active-site residue. Mg(2+) is bound by residues aspartate 14 and glycine 41. Residues 14–17 (DEGK), 39–42 (NAGH), threonine 130, arginine 144, glutamine 225, threonine 240, and arginine 304 contribute to the IMP site. Histidine 42 (proton donor) is an active-site residue. 300 to 306 (AVTGRPR) provides a ligand contact to substrate. GTP contacts are provided by residues arginine 306, 332 to 334 (KLD), and 415 to 417 (STG).

It belongs to the adenylosuccinate synthetase family. As to quaternary structure, homodimer. Requires Mg(2+) as cofactor.

It localises to the cytoplasm. It catalyses the reaction IMP + L-aspartate + GTP = N(6)-(1,2-dicarboxyethyl)-AMP + GDP + phosphate + 2 H(+). It functions in the pathway purine metabolism; AMP biosynthesis via de novo pathway; AMP from IMP: step 1/2. Its function is as follows. Plays an important role in the de novo pathway of purine nucleotide biosynthesis. Catalyzes the first committed step in the biosynthesis of AMP from IMP. This Legionella pneumophila (strain Lens) protein is Adenylosuccinate synthetase.